Consider the following 375-residue polypeptide: EP300-interacting inhibitor of differentiation 3 (375 aa).

Residues 23-51 (AWQHLVKQEEEEAVKKEEKEEGEDEEEEG) adopt a coiled-coil conformation. The interval 30 to 68 (QEEEEAVKKEEKEEGEDEEEEGSDSSSDDPNPEPPCMHP) is disordered. Residues 42–60 (EEGEDEEEEGSDSSSDDPN) are compositionally biased toward acidic residues.

It belongs to the NSE4 family. As to quaternary structure, component of the SMC5-SMC6 complex which consists at least of SMC5, SMC6, NSMCE2, NSMCE1, NSMCE4A or EID3 and NSMCE3; EID3 seems to be a testis-specific subunit. NSMCE1, NSMCE4A or EID3 and NSMCE3 probably form a subcomplex that bridges the head domains of the SMC5:SMC6 heterodimer. Homodimer, and heterodimer with EID2. Interacts with the C-terminal region of CREBBP.

The protein localises to the nucleus. Its subcellular location is the cytoplasm. The protein resides in the chromosome. It localises to the telomere. Its function is as follows. Tissue-specific component of the SMC5-SMC6 complex, a complex involved in repair of DNA double-strand breaks by homologous recombination. The complex may promote sister chromatid homologous recombination by recruiting the SMC1-SMC3 cohesin complex to double-strand breaks. The complex is required for telomere maintenance via recombination and mediates sumoylation of shelterin complex (telosome) components. In terms of biological role, acts as a repressor of nuclear receptor-dependent transcription possibly by interfering with CREBBP-dependent coactivation. May function as a coinhibitor of other CREBBP/EP300-dependent transcription factors. This is EP300-interacting inhibitor of differentiation 3 from Mus musculus (Mouse).